The chain runs to 285 residues: Golgi to ER traffic protein 2 (285 aa).

Over residues 1–10 (MSELTEAEKR) the composition is skewed to basic and acidic residues. 2 disordered regions span residues 1–72 (MSEL…KEDS) and 87–106 (MQGQGTGKSTPQDSSTPDLL). Residue serine 2 is modified to N-acetylserine. Topologically, residues 2–148 (SELTEAEKRR…LDYHDYLLNR (147 aa)) are cytoplasmic. Residues 11-20 (RLLRERRQKK) show a composition bias toward basic residues. Polar residues predominate over residues 24-42 (GGASSRLNKITGQASSHLN). Serine 45 is subject to Phosphoserine. The segment covering 49–60 (APSAAKTTPPAS) has biased composition (low complexity). Residues 93–104 (GKSTPQDSSTPD) show a composition bias toward polar residues. The helical transmembrane segment at 149–169 (LKAWTILVKWVFFLLPYLYLI) threads the bilayer. Residues 170–196 (TRPNSSVWPAYAFTQSAWFAPLRNPSN) lie on the Lumenal side of the membrane. N-linked (GlcNAc...) asparagine glycosylation is found at asparagine 173 and asparagine 196. Residues 197–216 (FTRIFATFEFLSISIYYQLL) traverse the membrane as a helical segment. The Cytoplasmic portion of the chain corresponds to 217 to 263 (KNVEHKSKIKNLQDTNKLVKLVSLVPEGVIPVANLKGKLITLLQYWD). The chain crosses the membrane as a helical span at residues 264 to 284 (LLSMLITDISFVLIVLGLLTY). A topological domain (lumenal) is located at residue leucine 285.

It belongs to the GET2 family. As to quaternary structure, component of the Golgi to ER traffic (GET) complex, which is composed of GET1, GET2 and GET3. Within the complex, GET1 and GET2 form a heterotetramer which is stabilized by phosphatidylinositol binding and which binds to the GET3 homodimer.

The protein resides in the endoplasmic reticulum membrane. Its subcellular location is the golgi apparatus membrane. Its function is as follows. Required for the post-translational delivery of tail-anchored (TA) proteins to the endoplasmic reticulum. Together with GET1, acts as a membrane receptor for soluble GET3, which recognizes and selectively binds the transmembrane domain of TA proteins in the cytosol. The GET complex cooperates with the HDEL receptor ERD2 to mediate the ATP-dependent retrieval of resident ER proteins that contain a C-terminal H-D-E-L retention signal from the Golgi to the ER. Involved in DNA replication and DNA damage response and also in cell wall function. This chain is Golgi to ER traffic protein 2, found in Saccharomyces cerevisiae (strain RM11-1a) (Baker's yeast).